A 345-amino-acid chain; its full sequence is Papain (345 aa).

Positions 1–18 are cleaved as a signal peptide; the sequence is MAMIPSISKLLFVAICLF. The propeptide at 19–133 is activation peptide; sequence VYMGLSFGDF…EEVLNDGDVN (115 aa). Disulfide bonds link cysteine 155-cysteine 196, cysteine 189-cysteine 228, and cysteine 286-cysteine 333. Residue cysteine 158 is part of the active site. Cysteine 158 provides a ligand contact to E64. Cysteine 158 contributes to the leupeptin binding site. Catalysis depends on residues histidine 292 and asparagine 308.

It belongs to the peptidase C1 family.

It carries out the reaction Hydrolysis of proteins with broad specificity for peptide bonds, but preference for an amino acid bearing a large hydrophobic side chain at the P2 position. Does not accept Val in P1'.. With respect to regulation, repressed by the active-site-directed cysteine protease inhibitor E64 (L-trans-epoxysuccinyl-leucylamide-(4-guanido)-butane) produced by Aspergillus japonicus. Inhibited by the inhibitor of cysteine proteases from Trypanosoma brucei (TbICP, rhodesain) and Colocasia esculenta cv. Kaohsiung no. 1 (CeCPI, tarocystatin). Repressed by leupeptin, a peptidic cysteine, serine and threonine protease inhibitor. Cysteine proteinase with a high level of diversity in substrate specificity, an amino acid bearing a large hydrophobic side chain at the P2 position is preferred. This is Papain from Carica papaya (Papaya).